A 475-amino-acid polypeptide reads, in one-letter code: Probable UDP-N-acetylglucosamine pyrophosphorylase (475 aa).

Positions L103 to G106 match the Substrate binding motif. Residues L103–G106, K117, Q194, and G220 each bind UTP. Residue N221 coordinates substrate. Residue D251 coordinates UTP. A Substrate binding motif is present at residues E301–Y302. A UTP-binding site is contributed by K378. S405 carries the phosphoserine modification. K410 lines the substrate pocket.

The protein belongs to the UDPGP type 1 family.

Its subcellular location is the cytoplasm. The protein localises to the nucleus. It catalyses the reaction N-acetyl-alpha-D-glucosamine 1-phosphate + UTP + H(+) = UDP-N-acetyl-alpha-D-glucosamine + diphosphate. Its pathway is nucleotide-sugar biosynthesis; UDP-N-acetyl-alpha-D-glucosamine biosynthesis; UDP-N-acetyl-alpha-D-glucosamine from N-acetyl-alpha-D-glucosamine 1-phosphate: step 1/1. This is Probable UDP-N-acetylglucosamine pyrophosphorylase (uap1) from Schizosaccharomyces pombe (strain 972 / ATCC 24843) (Fission yeast).